The sequence spans 283 residues: 5'-nucleotidase SurE (283 aa).

A divalent metal cation is bound by residues D14, D15, S47, and N105.

The protein belongs to the SurE nucleotidase family. A divalent metal cation serves as cofactor.

The protein localises to the cytoplasm. It catalyses the reaction a ribonucleoside 5'-phosphate + H2O = a ribonucleoside + phosphate. Nucleotidase that shows phosphatase activity on nucleoside 5'-monophosphates. The protein is 5'-nucleotidase SurE of Chlamydia trachomatis serovar L2 (strain ATCC VR-902B / DSM 19102 / 434/Bu).